The primary structure comprises 398 residues: G2/mitotic-specific cyclin-B2 (398 aa).

A Phosphothreonine modification is found at Thr8. Phosphoserine occurs at positions 11, 77, and 92. At Thr94 the chain carries Phosphothreonine. Phosphoserine occurs at positions 99, 392, and 398.

This sequence belongs to the cyclin family. Cyclin AB subfamily. In terms of assembly, interacts with the CDK1 protein kinase to form a serine/threonine kinase holoenzyme complex also known as maturation promoting factor (MPF). The cyclin subunit imparts substrate specificity to the complex.

In terms of biological role, essential for the control of the cell cycle at the G2/M (mitosis) transition. The chain is G2/mitotic-specific cyclin-B2 (CCNB2) from Macaca fascicularis (Crab-eating macaque).